The primary structure comprises 310 residues: uncharacterized protein (310 aa).

The segment covering 1 to 11 (MKVKSILKHSR) has biased composition (basic residues). Disordered stretches follow at residues 1 to 227 (MKVK…SDHA) and 242 to 310 (AMEE…NENE). Residues 12-50 (MSSPSLETDSMESGQQQNMVSSTPSIDMNESDCSGTGTP) are compositionally biased toward polar residues. The span at 51–80 (SEERIRRLRWDEENLSKAEQQKSAKMKITE) shows a compositional bias: basic and acidic residues. The span at 91–105 (PDDEVPEINLDETDS) shows a compositional bias: acidic residues. Positions 110–121 (TAGTLGDTLGTL) are enriched in low complexity. Basic and acidic residues-rich tracts occupy residues 126–150 (VSKDSKDDNVSFSSDKKQFYVKKEP) and 182–195 (LPSKKELFPRETKP). Acidic residues predominate over residues 242–253 (AMEEEALSEAEE). Positions 254–265 (NIPKKKPDFNEL) are enriched in basic and acidic residues. Ser285 is subject to Phosphoserine. Positions 297–310 (DSGSASDVNMNENE) are enriched in polar residues.

This is an uncharacterized protein from Schizosaccharomyces pombe (strain 972 / ATCC 24843) (Fission yeast).